The chain runs to 733 residues: Phosphoribosylformylglycinamidine synthase subunit PurL (733 aa).

His-44 is an active-site residue. The ATP site is built by Tyr-47 and Lys-86. Glu-88 lines the Mg(2+) pocket. Substrate contacts are provided by residues 89-92 (SHNH) and Arg-111. His-90 acts as the Proton acceptor in catalysis. Asp-112 is a Mg(2+) binding site. Substrate is bound at residue Gln-233. Position 261 (Asp-261) interacts with Mg(2+). 305-307 (ESQ) contacts substrate. Asp-492 and Gly-529 together coordinate ATP. Residue Asn-530 participates in Mg(2+) binding. A substrate-binding site is contributed by Ser-532.

This sequence belongs to the FGAMS family. Monomer. Part of the FGAM synthase complex composed of 1 PurL, 1 PurQ and 2 PurS subunits.

The protein localises to the cytoplasm. It catalyses the reaction N(2)-formyl-N(1)-(5-phospho-beta-D-ribosyl)glycinamide + L-glutamine + ATP + H2O = 2-formamido-N(1)-(5-O-phospho-beta-D-ribosyl)acetamidine + L-glutamate + ADP + phosphate + H(+). The protein operates within purine metabolism; IMP biosynthesis via de novo pathway; 5-amino-1-(5-phospho-D-ribosyl)imidazole from N(2)-formyl-N(1)-(5-phospho-D-ribosyl)glycinamide: step 1/2. Its function is as follows. Part of the phosphoribosylformylglycinamidine synthase complex involved in the purines biosynthetic pathway. Catalyzes the ATP-dependent conversion of formylglycinamide ribonucleotide (FGAR) and glutamine to yield formylglycinamidine ribonucleotide (FGAM) and glutamate. The FGAM synthase complex is composed of three subunits. PurQ produces an ammonia molecule by converting glutamine to glutamate. PurL transfers the ammonia molecule to FGAR to form FGAM in an ATP-dependent manner. PurS interacts with PurQ and PurL and is thought to assist in the transfer of the ammonia molecule from PurQ to PurL. The sequence is that of Phosphoribosylformylglycinamidine synthase subunit PurL from Thermomicrobium roseum (strain ATCC 27502 / DSM 5159 / P-2).